Reading from the N-terminus, the 80-residue chain is uncharacterized protein (80 aa).

This sequence belongs to the BolA/IbaG family.

This is an uncharacterized protein from Buchnera aphidicola subsp. Acyrthosiphon pisum (strain APS) (Acyrthosiphon pisum symbiotic bacterium).